The following is a 358-amino-acid chain: MAPQNLSTFCLLLLYLIGAVIAGRDFYKILGVPRSASIKDIKKAYRKLALQLHPDRNPDDPQAQEKFQDLGAAYEVLSDSEKRKQYDTYGEEGLKDGHQSSHGDIFSHFFGDFGFMFGGTPRQQDRNIPRGSDIIVDLEVTLEEVYAGNFVEVVRNKPVARQAPGKRKCNCRQEMRTTQLGPGRFQMTQEVVCDECPNVKLVNEERTLEVEIEPGVRDGMEYPFIGEGEPHVDGEPGDLRFRIKVVKHPIFERRGDDLYTNVTISLVESLVGFEMDITHLDGHKVHISRDKITRPGAKLWKKGEGLPNFDNNNIKGSLIITFDVDFPKEQLTEEAREGIKQLLKQGSVQKVYNGLQGY.

The signal sequence occupies residues 1 to 22 (MAPQNLSTFCLLLLYLIGAVIA). Positions 25–90 (DFYKILGVPR…EKRKQYDTYG (66 aa)) constitute a J domain. Phosphothreonine is present on Thr-188. Residue Asn-261 is glycosylated (N-linked (GlcNAc...) asparagine).

Part of a large chaperone multiprotein complex comprising DNAJB11, HSP90B1, HSPA5, HYOU, PDIA2, PDIA4, PDIA6, PPIB, SDF2L1, UGGT1 and very small amounts of ERP29, but not, or at very low levels, CALR nor CANX. Binds to denatured substrates in an ATP-independent manner. Interacts via the J domain with HSPA5 in an ATP-dependent manner. Contains high-mannose Endo H-sensitive carbohydrates. Post-translationally, cys-169, Cys-171, Cys-193 and Cys-196 form intramolecular disulfide bonds. The preferential partner for each Cys is not known. In terms of processing, thr-188 was reported to be phosphorylated upon DNA damage by ATM or ATR; however as this position has been shown to be in the ER lumen, the in vivo relevance is not proven. As to expression, widely expressed.

Its subcellular location is the endoplasmic reticulum lumen. In terms of biological role, as a co-chaperone for HSPA5 it is required for proper folding, trafficking or degradation of proteins. Binds directly to both unfolded proteins that are substrates for ERAD and nascent unfolded peptide chains, but dissociates from the HSPA5-unfolded protein complex before folding is completed. May help recruiting HSPA5 and other chaperones to the substrate. Stimulates HSPA5 ATPase activity. It is necessary for maturation and correct trafficking of PKD1. The sequence is that of DnaJ homolog subfamily B member 11 (DNAJB11) from Homo sapiens (Human).